Consider the following 351-residue polypeptide: Porphobilinogen deaminase (351 aa).

An S-(dipyrrolylmethanemethyl)cysteine modification is found at Cys242.

Belongs to the HMBS family. In terms of assembly, monomer. Dipyrromethane is required as a cofactor.

It catalyses the reaction 4 porphobilinogen + H2O = hydroxymethylbilane + 4 NH4(+). Its pathway is porphyrin-containing compound metabolism; protoporphyrin-IX biosynthesis; coproporphyrinogen-III from 5-aminolevulinate: step 2/4. Tetrapolymerization of the monopyrrole PBG into the hydroxymethylbilane pre-uroporphyrinogen in several discrete steps. This chain is Porphobilinogen deaminase, found in Rickettsia africae (strain ESF-5).